We begin with the raw amino-acid sequence, 357 residues long: A-type ATP synthase subunit C (357 aa).

The protein belongs to the V-ATPase V0D/AC39 subunit family. Has multiple subunits with at least A(3), B(3), C, D, E, F, H, I and proteolipid K(x).

It is found in the cell membrane. In terms of biological role, component of the A-type ATP synthase that produces ATP from ADP in the presence of a proton gradient across the membrane. This is A-type ATP synthase subunit C from Methanococcoides burtonii (strain DSM 6242 / NBRC 107633 / OCM 468 / ACE-M).